The following is a 458-amino-acid chain: Exodeoxyribonuclease 7 large subunit (458 aa).

Belongs to the XseA family. As to quaternary structure, heterooligomer composed of large and small subunits.

It is found in the cytoplasm. The enzyme catalyses Exonucleolytic cleavage in either 5'- to 3'- or 3'- to 5'-direction to yield nucleoside 5'-phosphates.. In terms of biological role, bidirectionally degrades single-stranded DNA into large acid-insoluble oligonucleotides, which are then degraded further into small acid-soluble oligonucleotides. The chain is Exodeoxyribonuclease 7 large subunit from Escherichia coli O81 (strain ED1a).